The following is a 108-amino-acid chain: UPF0060 membrane protein SAB2216c (108 aa).

The next 4 membrane-spanning stretches (helical) occupy residues 5-25 (IFIF…IWLW), 31-51 (CSLV…IATF), 60-80 (VYAA…MVVD), and 86-106 (KYDV…LLPS).

The protein belongs to the UPF0060 family.

The protein resides in the cell membrane. The sequence is that of UPF0060 membrane protein SAB2216c from Staphylococcus aureus (strain bovine RF122 / ET3-1).